The sequence spans 498 residues: Ribose import ATP-binding protein RbsA 1 (498 aa).

2 consecutive ABC transporter domains span residues 7 to 243 and 254 to 496; these read LHIQ…VGRR and PRGE…IGKS. 39–46 is a binding site for ATP; the sequence is GENGAGKS.

This sequence belongs to the ABC transporter superfamily. Ribose importer (TC 3.A.1.2.1) family. In terms of assembly, the complex is composed of an ATP-binding protein (RbsA), two transmembrane proteins (RbsC) and a solute-binding protein (RbsB).

The protein localises to the cell inner membrane. It catalyses the reaction D-ribose(out) + ATP + H2O = D-ribose(in) + ADP + phosphate + H(+). Functionally, part of the ABC transporter complex RbsABC involved in ribose import. Responsible for energy coupling to the transport system. In Pasteurella multocida (strain Pm70), this protein is Ribose import ATP-binding protein RbsA 1.